Consider the following 237-residue polypeptide: D-aminoacyl-tRNA deacylase (237 aa).

It belongs to the DtdA deacylase family. Monomer. The cofactor is Zn(2+).

The catalysed reaction is a D-aminoacyl-tRNA + H2O = a tRNA + a D-alpha-amino acid + H(+). The enzyme catalyses glycyl-tRNA(Ala) + H2O = tRNA(Ala) + glycine + H(+). Its function is as follows. D-aminoacyl-tRNA deacylase with broad substrate specificity. By recycling D-aminoacyl-tRNA to D-amino acids and free tRNA molecules, this enzyme counteracts the toxicity associated with the formation of D-aminoacyl-tRNA entities in vivo. This chain is D-aminoacyl-tRNA deacylase, found in Saccharolobus islandicus (strain Y.N.15.51 / Yellowstone #2) (Sulfolobus islandicus).